Reading from the N-terminus, the 226-residue chain is Phosphoglycolate phosphatase (226 aa).

Catalysis depends on D9, which acts as the Nucleophile. Residues D9 and D11 each coordinate Mg(2+). Substrate is bound at residue K150. Mg(2+) contacts are provided by D173 and D177.

Belongs to the archaeal SPP-like hydrolase family. Mg(2+) serves as cofactor.

The enzyme catalyses 2-phosphoglycolate + H2O = glycolate + phosphate. Functionally, catalyzes the dephosphorylation of 2-phosphoglycolate. This chain is Phosphoglycolate phosphatase, found in Methanococcoides burtonii (strain DSM 6242 / NBRC 107633 / OCM 468 / ACE-M).